The primary structure comprises 152 residues: Ribonuclease pancreatic (152 aa).

The signal sequence occupies residues 1-24 (MALDKSVILLPLLVLVLLVLGCLG). Lys-31 and Arg-34 together coordinate substrate. Catalysis depends on His-36, which acts as the Proton acceptor. A glycan (N-linked (GlcNAc...) asparagine) is linked at Asn-46. 4 cysteine pairs are disulfide-bonded: Cys-50-Cys-108, Cys-64-Cys-119, Cys-82-Cys-134, and Cys-89-Cys-96. Substrate is bound by residues 65-69 (KPVNT), Lys-90, and Arg-109. Asn-112 carries N-linked (GlcNAc...) asparagine glycosylation. His-143 (proton donor) is an active-site residue.

Belongs to the pancreatic ribonuclease family. Monomer. Interacts with and forms tight 1:1 complexes with RNH1. Dimerization of two such complexes may occur. Interaction with RNH1 inhibits this protein.

Its subcellular location is the secreted. The catalysed reaction is an [RNA] containing cytidine + H2O = an [RNA]-3'-cytidine-3'-phosphate + a 5'-hydroxy-ribonucleotide-3'-[RNA].. The enzyme catalyses an [RNA] containing uridine + H2O = an [RNA]-3'-uridine-3'-phosphate + a 5'-hydroxy-ribonucleotide-3'-[RNA].. Endonuclease that catalyzes the cleavage of RNA on the 3' side of pyrimidine nucleotides. Acts on single-stranded and double-stranded RNA. The protein is Ribonuclease pancreatic (RNASE1) of Papio hamadryas (Hamadryas baboon).